The sequence spans 110 residues: Probable ribonuclease HepT (110 aa).

Active-site residues include Arg75 and His80. The short motif at 75 to 82 is the RX(4)HXY motif element; sequence RDKLIHAY. Tyr82 is subject to O-di-AMP-tyrosine.

This sequence belongs to the HepT RNase toxin family. Modified by cognate antitoxin MntA; probably at least 2 successive AMPylation events occur on Tyr-82.

Toxic component of a type VII toxin-antitoxin (TA) system. Overexpression in E.coli inhibits cell growth. Neutralized by cognate antitoxin MntA. Neutralization is probably due to AMPylation by MntA. Probably an RNAase. The chain is Probable ribonuclease HepT from Thermococcus cleftensis (strain DSM 27260 / KACC 17922 / CL1).